The following is a 577-amino-acid chain: MNKLYIGNLNESVTPADLEKVFAEHKISYSGQFLVKSGYAFVDCPDEHWAMKAIETFSGKVELQGKRLEIEHSVPKKQRSRKIQIRNIPPQLRWEVLDSLLAQYGTVENCEQVNTESETAVVNVTYSNREQTRQAIMKLNGHQLENHALKVSYIPDEQIAQGPENGRRGGFGSRGQPRQGSPVAAGAPAKQQQVDIPLRLLVPTQYVGAIIGKEGATIRNITKQTQSKIDVHRKENAGAAEKAISVHSTPEGCSSACKMILEIMHKEAKDTKTADEVPLKILAHNNFVGRLIGKEGRNLKKVEQDTETKITISSLQDLTLYNPERTITVKGAIENCCRAEQEIMKKVREAYENDVAAMSLQSHLIPGLNLAAVGLFPASSSAVPPPPSSVTGAAPYSSFMQAPEQEMVQVFIPAQAVGAIIGKKGQHIKQLSRFASASIKIAPPETPDSKVRMVIITGPPEAQFKAQGRIYGKLKEENFFGPKEEVKLETHIRVPASAAGRVIGKGGKTVNELQNLTAAEVVVPRDQTPDENDQVIVKIIGHFYASQMAQRKIRDILAQVKQQHQKGQSNQAQARRK.

2 RRM domains span residues 2–75 and 81–156; these read NKLY…HSVP and RKIQ…YIPD. Ser12 and Ser73 each carry phosphoserine. Residues 160-190 are disordered; the sequence is AQGPENGRRGGFGSRGQPRQGSPVAAGAPAK. Phosphoserine is present on Ser181. KH domains lie at 195–260, 276–343, 405–470, and 487–553; these read DIPL…CKMI, EVPL…EQEI, QEMV…QGRI, and KLET…QRKI. The interval 310–324 is sufficient for nuclear export; that stretch reads ITISSLQDLTLYNPE. The interval 485-495 is sufficient for nuclear export; that stretch reads EVKLETHIRVP. At Thr528 the chain carries Phosphothreonine.

The protein belongs to the RRM IMP/VICKZ family. Can form homodimers and heterodimers with IGF2BP1 and IGF2BP3. Component of the coding region determinant (CRD)-mediated complex, composed of DHX9, HNRNPU, IGF2BP1, SYNCRIP and YBX1. During HCV infection, identified in a HCV IRES-mediated translation complex, at least composed of EIF3C, IGF2BP1, RPS3 and HCV RNA-replicon. Interacts (via the KH domains) with HIV-1 GAG (via the second zinc finger motif of NC). Associates (via the RRM domains and KH domains) with HIV-1 particles. Identified in a mRNP complex, composed of at least DHX9, DDX3X, ELAVL1, HNRNPU, IGF2BP1, ILF3, PABPC1, PCBP2, PTBP2, STAU1, STAU2, SYNCRIP and YBX1. Identified in a IGF2BP1-dependent mRNP granule complex containing untranslated mRNAs. Interacts with DHX9, ELAVL2, HNRNPA2B1, HNRNPC, HNRNPH1, HNRNPU, IGF2BP2, ILF2, and YBX1. Interacts with FMR1. Component of a multisubunit autoregulatory RNP complex (ARC), at least composed of IGF2BP1, PABPC1 and CSDE1/UNR. Directly interacts with PABPC1. Component of a TAU mRNP complex, at least composed of IGF2BP1, ELAVL4 and G3BP. Interacts with ELAVL4 in an RNA-dependent manner. Associates with microtubules and polysomes. Interacts with AGO1 and AGO2. Interacts with ELAVL1 and MATR3. Interacts (via KH3 and KH4 domains) with SEPIN14P20 peptide RBRP; the interaction results in increased binding of IGF2BP1 to N6-methyladenosine (m6A)-containing mRNAs. In terms of processing, phosphorylated at Ser-181 by mTORC2 cotranslationally, promoting binding to the 3'-UTR of IGF2 mRNA. As to expression, mainly expressed in the embryo, including in fetal liver, fetal lung, fetal kidney, fetal thymus (at protein level). Also expressed follicles of ovary, as well as in gonocytes of testis, spermatogonia, semen, oocytes and placenta (at protein level). Expressed in various cancers, including testis and lung cancers (at protein level), as well as kidney, prostate and trachea cancers.

The protein localises to the nucleus. Its subcellular location is the cytoplasm. It localises to the perinuclear region. It is found in the P-body. The protein resides in the stress granule. The protein localises to the cell projection. Its subcellular location is the lamellipodium. It localises to the dendrite. It is found in the dendritic spine. The protein resides in the growth cone. The protein localises to the filopodium. Its subcellular location is the axon. Functionally, RNA-binding factor that recruits target transcripts to cytoplasmic protein-RNA complexes (mRNPs). This transcript 'caging' into mRNPs allows mRNA transport and transient storage. It also modulates the rate and location at which target transcripts encounter the translational apparatus and shields them from endonuclease attacks or microRNA-mediated degradation. Preferentially binds to N6-methyladenosine (m6A)-containing mRNAs and increases their stability. Plays a direct role in the transport and translation of transcripts required for axonal regeneration in adult sensory neurons. Regulates localized beta-actin/ACTB mRNA translation, a crucial process for cell polarity, cell migration and neurite outgrowth. Co-transcriptionally associates with the ACTB mRNA in the nucleus. This binding involves a conserved 54-nucleotide element in the ACTB mRNA 3'-UTR, known as the 'zipcode'. The RNP thus formed is exported to the cytoplasm, binds to a motor protein and is transported along the cytoskeleton to the cell periphery. During transport, prevents ACTB mRNA from being translated into protein. When the RNP complex reaches its destination near the plasma membrane, IGF2BP1 is phosphorylated. This releases the mRNA, allowing ribosomal 40S and 60S subunits to assemble and initiate ACTB protein synthesis. Monomeric ACTB then assembles into the subcortical actin cytoskeleton. During neuronal development, key regulator of neurite outgrowth, growth cone guidance and neuronal cell migration, presumably through the spatiotemporal fine tuning of protein synthesis, such as that of ACTB. May regulate mRNA transport to activated synapses. Binds to and stabilizes ABCB1/MDR-1 mRNA. During interstinal wound repair, interacts with and stabilizes PTGS2 transcript. PTGS2 mRNA stabilization may be crucial for colonic mucosal wound healing. Binds to the 3'-UTR of IGF2 mRNA by a mechanism of cooperative and sequential dimerization and regulates IGF2 mRNA subcellular localization and translation. Binds to MYC mRNA, in the coding region instability determinant (CRD) of the open reading frame (ORF), hence preventing MYC cleavage by endonucleases and possibly microRNA targeting to MYC-CRD. Binding to MYC mRNA is enhanced by m6A-modification of the CRD. Binds to the 3'-UTR of CD44 mRNA and stabilizes it, hence promotes cell adhesion and invadopodia formation in cancer cells. Binds to the oncofetal H19 transcript and to the neuron-specific TAU mRNA and regulates their localizations. Binds to and stabilizes BTRC/FBW1A mRNA. Binds to the adenine-rich autoregulatory sequence (ARS) located in PABPC1 mRNA and represses its translation. PABPC1 mRNA-binding is stimulated by PABPC1 protein. Prevents BTRC/FBW1A mRNA degradation by disrupting microRNA-dependent interaction with AGO2. Promotes the directed movement of tumor-derived cells by fine-tuning intracellular signaling networks. Binds to MAPK4 3'-UTR and inhibits its translation. Interacts with PTEN transcript open reading frame (ORF) and prevents mRNA decay. This combined action on MAPK4 (down-regulation) and PTEN (up-regulation) antagonizes HSPB1 phosphorylation, consequently it prevents G-actin sequestration by phosphorylated HSPB1, allowing F-actin polymerization. Hence enhances the velocity of cell migration and stimulates directed cell migration by PTEN-modulated polarization. Interacts with Hepatitis C virus (HCV) 5'-UTR and 3'-UTR and specifically enhances translation at the HCV IRES, but not 5'-cap-dependent translation, possibly by recruiting eIF3. Interacts with HIV-1 GAG protein and blocks the formation of infectious HIV-1 particles. Reduces HIV-1 assembly by inhibiting viral RNA packaging, as well as assembly and processing of GAG protein on cellular membranes. During cellular stress, such as oxidative stress or heat shock, stabilizes target mRNAs that are recruited to stress granules, including CD44, IGF2, MAPK4, MYC, PTEN, RAPGEF2 and RPS6KA5 transcripts. The polypeptide is Insulin-like growth factor 2 mRNA-binding protein 1 (IGF2BP1) (Homo sapiens (Human)).